Consider the following 639-residue polypeptide: Chaperone protein DnaK (639 aa).

Phosphothreonine; by autocatalysis is present on T198. The span at 603–618 (AKAQTQGGAQEGAAKQ) shows a compositional bias: low complexity. Positions 603 to 639 (AKAQTQGGAQEGAAKQSNATADDVVDAEFEEVKDDKK) are disordered. Residues 625-639 (DVVDAEFEEVKDDKK) show a composition bias toward acidic residues.

Belongs to the heat shock protein 70 family.

In terms of biological role, acts as a chaperone. The sequence is that of Chaperone protein DnaK from Shewanella oneidensis (strain ATCC 700550 / JCM 31522 / CIP 106686 / LMG 19005 / NCIMB 14063 / MR-1).